Reading from the N-terminus, the 151-residue chain is Deoxyuridine 5'-triphosphate nucleotidohydrolase (151 aa).

Substrate is bound by residues 70 to 72, Asn83, 87 to 89, and Met97; these read RSG and LID.

The protein belongs to the dUTPase family. Mg(2+) is required as a cofactor.

The enzyme catalyses dUTP + H2O = dUMP + diphosphate + H(+). It functions in the pathway pyrimidine metabolism; dUMP biosynthesis; dUMP from dCTP (dUTP route): step 2/2. Functionally, this enzyme is involved in nucleotide metabolism: it produces dUMP, the immediate precursor of thymidine nucleotides and it decreases the intracellular concentration of dUTP so that uracil cannot be incorporated into DNA. This is Deoxyuridine 5'-triphosphate nucleotidohydrolase from Psychromonas ingrahamii (strain DSM 17664 / CCUG 51855 / 37).